Reading from the N-terminus, the 443-residue chain is ATP-dependent protease ATPase subunit HslU (443 aa).

Residues I20, 62–67 (GVGKTE), D255, E321, and R393 contribute to the ATP site.

This sequence belongs to the ClpX chaperone family. HslU subfamily. As to quaternary structure, a double ring-shaped homohexamer of HslV is capped on each side by a ring-shaped HslU homohexamer. The assembly of the HslU/HslV complex is dependent on binding of ATP.

The protein localises to the cytoplasm. In terms of biological role, ATPase subunit of a proteasome-like degradation complex; this subunit has chaperone activity. The binding of ATP and its subsequent hydrolysis by HslU are essential for unfolding of protein substrates subsequently hydrolyzed by HslV. HslU recognizes the N-terminal part of its protein substrates and unfolds these before they are guided to HslV for hydrolysis. This is ATP-dependent protease ATPase subunit HslU from Helicobacter pylori (strain P12).